We begin with the raw amino-acid sequence, 112 residues long: DNA-directed RNA polymerase subunit Rpo11 (112 aa).

The protein belongs to the archaeal Rpo11/eukaryotic RPB11/RPC19 RNA polymerase subunit family. Part of the RNA polymerase complex.

It is found in the cytoplasm. The enzyme catalyses RNA(n) + a ribonucleoside 5'-triphosphate = RNA(n+1) + diphosphate. In terms of biological role, DNA-dependent RNA polymerase (RNAP) catalyzes the transcription of DNA into RNA using the four ribonucleoside triphosphates as substrates. The polypeptide is DNA-directed RNA polymerase subunit Rpo11 (Methanopyrus kandleri (strain AV19 / DSM 6324 / JCM 9639 / NBRC 100938)).